A 421-amino-acid chain; its full sequence is Imidazolonepropionase (421 aa).

The Fe(3+) site is built by His81 and His83. 2 residues coordinate Zn(2+): His81 and His83. Residues Arg90, Tyr153, and His186 each contribute to the 4-imidazolone-5-propanoate site. Tyr153 serves as a coordination point for N-formimidoyl-L-glutamate. Fe(3+) is bound at residue His251. His251 is a Zn(2+) binding site. Residue Glu254 participates in 4-imidazolone-5-propanoate binding. Asp326 is a Fe(3+) binding site. Zn(2+) is bound at residue Asp326. The N-formimidoyl-L-glutamate site is built by Asn328 and Gly330. Ser331 provides a ligand contact to 4-imidazolone-5-propanoate.

The protein belongs to the metallo-dependent hydrolases superfamily. HutI family. Zn(2+) serves as cofactor. Fe(3+) is required as a cofactor.

It is found in the cytoplasm. It catalyses the reaction 4-imidazolone-5-propanoate + H2O = N-formimidoyl-L-glutamate. The protein operates within amino-acid degradation; L-histidine degradation into L-glutamate; N-formimidoyl-L-glutamate from L-histidine: step 3/3. Catalyzes the hydrolytic cleavage of the carbon-nitrogen bond in imidazolone-5-propanoate to yield N-formimidoyl-L-glutamate. It is the third step in the universal histidine degradation pathway. The protein is Imidazolonepropionase of Streptococcus gordonii (strain Challis / ATCC 35105 / BCRC 15272 / CH1 / DL1 / V288).